A 376-amino-acid polypeptide reads, in one-letter code: Alpha-ketoglutarate-dependent dioxygenase esdpJ (376 aa).

Fe cation is bound by residues histidine 145 and aspartate 147. Position 202 (threonine 202) interacts with 2-oxoglutarate. Residues 234 to 260 (YNQSSQEKKSEIHVEPRGSPNNVGSDL) are disordered. Residues 239–249 (QEKKSEIHVEP) are compositionally biased toward basic and acidic residues. Histidine 335 provides a ligand contact to Fe cation. Residues arginine 347 and arginine 351 each contribute to the 2-oxoglutarate site. Residues 354 to 376 (GVGEQPYLDPESKTRREALGEFN) form a disordered region. Over residues 363–376 (PESKTRREALGEFN) the composition is skewed to basic and acidic residues.

Belongs to the TfdA dioxygenase family. The cofactor is Fe(2+).

Functionally, alpha-ketoglutarate-dependent dioxygenas; part of the cluster that mediates the biosynthesis of shearones, diterpenoid pyrones (DPs) which are structurally diverse meroterpenoids consisting of a diterpene linked by a pyrone, and which may exhibit a range of bioactivities. The alpha-ketoglutarate-dependent dioxygenase esdpJ seems not to be involved in this pathway. The molecular scaffold is commonly biosynthesized by a series of enzymes including the non-reducing polyketide synthase (NR-PKS) esdpA that generates an alpha-pyrone; the prenyltransferase esdpC that attaches a geranylgeranyl pyrophosphate (GGPP) produced by the GGPP synthase (GGPPS) esdpD onto the pyrone unit; the FAD-dependent monooxygenase esdpE that converts an olefin on the diterpene unit into an epoxide; and the terpene cyclase esdpB that catalyzes the cyclization reactions to give the molecular backbone shearone A. In the modification steps, esdpF oxidizes the hydroxy group to a ketone at C-3 and esdpG then attaches hydroxy groups at both C-11 and C-12. After that, esdpI hydroxylates at C-20 and esdpH hydroxylates at C-6'. The ether bridge is generated by nucleophilic attack of the hydroxy group at C-20 to the carbonyl carbon at C-3. EsdpH can also functions prior to esdpI. The different combinations of these modification enzymes lead to the production of diverse shearone derivatives, shearone I being the end product of the pathway. The protein is Alpha-ketoglutarate-dependent dioxygenase esdpJ of Penicillium shearii (Eupenicillium shearii).